The sequence spans 342 residues: Platelet-activating factor receptor (342 aa).

The Extracellular portion of the chain corresponds to 1 to 16 (MEPHDSSHMDSEFRYT). Residues 17 to 38 (LFPIVYSIIFVLGVIANGYVLW) form a helical membrane-spanning segment. Residues 39-54 (VFARLYPCKKFNEIKI) lie on the Cytoplasmic side of the membrane. The chain crosses the membrane as a helical span at residues 55-74 (FMVNLTMADMLFLITLPLWI). Residues 75-91 (VYYQNQGNWILPKFLCN) lie on the Extracellular side of the membrane. A disulfide bridge links Cys-90 with Cys-173. A helical membrane pass occupies residues 92–113 (VAGCLFFINTYCSVAFLGVITY). The Cytoplasmic segment spans residues 114–133 (NRFQAVTRPIKTAQANTRKR). The chain crosses the membrane as a helical span at residues 134–155 (GISLSLVIWVAIVGAASYFLIL). Topologically, residues 156–184 (DSTNTVPDSAGSGNVTRCFEHYEKGSVPV) are extracellular. A glycan (N-linked (GlcNAc...) asparagine) is linked at Asn-169. The chain crosses the membrane as a helical span at residues 185-205 (LIIHIFIVFSFFLVFLIILFC). Residues 206-233 (NLVIIRTLLMQPVQQQRNAEVKRRALWM) are Cytoplasmic-facing. Residues 234–254 (VCTVLAVFIICFVPHHVVQLP) form a helical membrane-spanning segment. The Extracellular portion of the chain corresponds to 255–276 (WTLAELGFQDSKFHQAINDAHQ). Residues 277 to 296 (VTLCLLSTNCVLDPVIYCFL) traverse the membrane as a helical segment. The Cytoplasmic portion of the chain corresponds to 297-342 (TKKFRKHLTEKFYSMRSSRKCSRATTDTVTEVVVPFNQIPGNSLKN).

It belongs to the G-protein coupled receptor 1 family. In terms of assembly, interacts with ARRB1. In terms of tissue distribution, expressed in the placenta, lung, left and right heart ventricles, heart atrium, leukocytes and differentiated HL-60 granulocytes.

The protein resides in the cell membrane. Receptor for platelet activating factor, a chemotactic phospholipid mediator that possesses potent inflammatory, smooth-muscle contractile and hypotensive activity. Seems to mediate its action via a G protein that activates a phosphatidylinositol-calcium second messenger system. This is Platelet-activating factor receptor (PTAFR) from Homo sapiens (Human).